The following is a 147-amino-acid chain: HTH-type transcriptional regulator MgrA (147 aa).

Residues 8 to 139 (KEQLCFSLYN…LNRLLGKVIH (132 aa)) form the HTH marR-type domain. The H-T-H motif DNA-binding region spans 55–78 (VKKVVTELALDTGTVSPLLKRMEQ).

It is found in the cytoplasm. Its function is as follows. Regulatory protein involved in autolytic activity, multidrug resistance and virulence. Controls autolysis by inactivating LytM, LytN (autolysins) and SarV (autolysis activator) and activating ArlRS, LrgAB and LytSR (autolysis inhibitors). Acts as a dual regulator for resistance to multiple drugs by inactivating NorB and tet38 and activating NorA. Positively controls the expression of virulence accessory gene regulator (agr) to promote alpha-hemolysin (hla) transcription and down-regulates staphylococcal accessory regulator (sarS), leading to repression of surface protein A (spa). Binds directly to hla promoter to augment its activation. Binds to sarS promoter to down-regulate spa expression. In Staphylococcus aureus (strain NCTC 8325 / PS 47), this protein is HTH-type transcriptional regulator MgrA (mgrA).